The primary structure comprises 143 residues: Large-conductance mechanosensitive channel (143 aa).

Transmembrane regions (helical) follow at residues 10–30 (FAVK…GAFS) and 89–109 (GSFI…FLMV).

This sequence belongs to the MscL family. As to quaternary structure, homopentamer.

It is found in the cell inner membrane. In terms of biological role, channel that opens in response to stretch forces in the membrane lipid bilayer. May participate in the regulation of osmotic pressure changes within the cell. The polypeptide is Large-conductance mechanosensitive channel (Burkholderia multivorans (strain ATCC 17616 / 249)).